Here is a 120-residue protein sequence, read N- to C-terminus: Large ribosomal subunit protein bL19 (120 aa).

The protein belongs to the bacterial ribosomal protein bL19 family.

Its function is as follows. This protein is located at the 30S-50S ribosomal subunit interface and may play a role in the structure and function of the aminoacyl-tRNA binding site. The protein is Large ribosomal subunit protein bL19 of Chlorobium luteolum (strain DSM 273 / BCRC 81028 / 2530) (Pelodictyon luteolum).